Here is a 1059-residue protein sequence, read N- to C-terminus: Kinesin-like protein KIN-7K, chloroplastic (1059 aa).

Composition is skewed to low complexity over residues 1–35 (MSSRPSSSASSRRSSSPFSAGSRRPPTSSSSSAGS) and 43–58 (PRSYSTASSVSSSSHF). The transit peptide at 1–48 (MSSRPSSSASSRRSSSPFSAGSRRPPTSSSSSAGSYLTGRLMPRSYST) directs the protein to the chloroplast. The interval 1–99 (MSSRPSSSAS…SPPSPVPFPS (99 aa)) is disordered. The segment covering 59-69 (FGGGGGSGGGS) has biased composition (gly residues). Low complexity predominate over residues 70 to 87 (RSTTPGRRGSSSSSLVGP). Residues 88–97 (VPSPPSPVPF) show a composition bias toward pro residues. Residues 114–431 (SISVTIRFRP…LKFASRAKRV (318 aa)) enclose the Kinesin motor domain. ATP is bound at residue 194–201 (GVTSSGKT). Residues 435-518 (AARNRMIDEK…IQRLTKLILV (84 aa)) are a coiled coil. A disordered region spans residues 526 to 570 (ALTDTSSHQRHNSVNEEDKVSTSQDSSMLVQNDSATKDSLSSASP). The segment covering 546 to 569 (STSQDSSMLVQNDSATKDSLSSAS) has biased composition (polar residues). Coiled-coil stretches lie at residues 640-674 (EGTKNQIDNLEREIREKRRHMRALEQKLMESGEAS), 700-781 (ELEL…EENR), and 862-910 (LEDM…LEND). Residues 1013 to 1048 (CKVCFESATAAVLLPCRHFCLCKPCSLACSECPLCR) form an RING-type zinc finger.

This sequence belongs to the TRAFAC class myosin-kinesin ATPase superfamily. Kinesin family. KIN-7 subfamily.

The protein resides in the plastid. It is found in the chloroplast. This Oryza sativa subsp. japonica (Rice) protein is Kinesin-like protein KIN-7K, chloroplastic.